The following is a 308-amino-acid chain: Ribosomal RNA small subunit methyltransferase H (308 aa).

Residues 36–38 (GGH), aspartate 55, phenylalanine 86, aspartate 103, and glutamine 110 each bind S-adenosyl-L-methionine.

It belongs to the methyltransferase superfamily. RsmH family.

The protein resides in the cytoplasm. It carries out the reaction cytidine(1402) in 16S rRNA + S-adenosyl-L-methionine = N(4)-methylcytidine(1402) in 16S rRNA + S-adenosyl-L-homocysteine + H(+). Specifically methylates the N4 position of cytidine in position 1402 (C1402) of 16S rRNA. The chain is Ribosomal RNA small subunit methyltransferase H from Helicobacter pylori (strain HPAG1).